Here is a 214-residue protein sequence, read N- to C-terminus: tRNA (guanine-N(7)-)-methyltransferase (214 aa).

S-adenosyl-L-methionine-binding residues include glutamate 44, glutamate 69, aspartate 96, and aspartate 118. Residue aspartate 118 is part of the active site. Substrate-binding positions include lysine 122, aspartate 154, and 191 to 194 (TEYE).

The protein belongs to the class I-like SAM-binding methyltransferase superfamily. TrmB family.

It carries out the reaction guanosine(46) in tRNA + S-adenosyl-L-methionine = N(7)-methylguanosine(46) in tRNA + S-adenosyl-L-homocysteine. The protein operates within tRNA modification; N(7)-methylguanine-tRNA biosynthesis. Functionally, catalyzes the formation of N(7)-methylguanine at position 46 (m7G46) in tRNA. This chain is tRNA (guanine-N(7)-)-methyltransferase, found in Listeria welshimeri serovar 6b (strain ATCC 35897 / DSM 20650 / CCUG 15529 / CIP 8149 / NCTC 11857 / SLCC 5334 / V8).